The sequence spans 789 residues: Glycerol-3-phosphate acyltransferase (789 aa).

An HXXXXD motif motif is present at residues 275-280 (SHRSYI).

Belongs to the GPAT/DAPAT family.

Its subcellular location is the cell membrane. The enzyme catalyses sn-glycerol 3-phosphate + an acyl-CoA = a 1-acyl-sn-glycero-3-phosphate + CoA. The protein operates within phospholipid metabolism; CDP-diacylglycerol biosynthesis; CDP-diacylglycerol from sn-glycerol 3-phosphate: step 1/3. This is Glycerol-3-phosphate acyltransferase from Mycobacterium bovis (strain BCG / Pasteur 1173P2).